A 207-amino-acid chain; its full sequence is Large ribosomal subunit protein uL4 (207 aa).

The interval 48-75 (THAVKNRSAVSGGGRKPWKQKGTGRARA) is disordered.

It belongs to the universal ribosomal protein uL4 family. In terms of assembly, part of the 50S ribosomal subunit.

Functionally, one of the primary rRNA binding proteins, this protein initially binds near the 5'-end of the 23S rRNA. It is important during the early stages of 50S assembly. It makes multiple contacts with different domains of the 23S rRNA in the assembled 50S subunit and ribosome. Its function is as follows. Forms part of the polypeptide exit tunnel. The sequence is that of Large ribosomal subunit protein uL4 from Leuconostoc citreum (strain KM20).